A 203-amino-acid chain; its full sequence is Ribosomal RNA small subunit methyltransferase G (203 aa).

Residues Gly75, Leu80, 126–127 (VE), and Arg141 each bind S-adenosyl-L-methionine.

This sequence belongs to the methyltransferase superfamily. RNA methyltransferase RsmG family.

The protein resides in the cytoplasm. The catalysed reaction is guanosine(527) in 16S rRNA + S-adenosyl-L-methionine = N(7)-methylguanosine(527) in 16S rRNA + S-adenosyl-L-homocysteine. In terms of biological role, specifically methylates the N7 position of guanine in position 527 of 16S rRNA. The chain is Ribosomal RNA small subunit methyltransferase G from Ruthia magnifica subsp. Calyptogena magnifica.